Here is a 591-residue protein sequence, read N- to C-terminus: Putative F-box protein At1g32140 (591 aa).

Positions 2–49 (TMMSDLSLDLVEEILCRVPITSLKAVRSSCKLWNVLSKNRILCKTEAR) constitute an F-box domain. Residues 567-581 (AGRKRKEKKTKRKSK) show a composition bias toward basic residues. A disordered region spans residues 567-591 (AGRKRKEKKTKRKSKDKQMKLSNKV).

This is Putative F-box protein At1g32140 from Arabidopsis thaliana (Mouse-ear cress).